Consider the following 117-residue polypeptide: Large ribosomal subunit protein uL18 (117 aa).

The protein belongs to the universal ribosomal protein uL18 family. Part of the 50S ribosomal subunit; part of the 5S rRNA/L5/L18/L25 subcomplex. Contacts the 5S and 23S rRNAs.

Its function is as follows. This is one of the proteins that bind and probably mediate the attachment of the 5S RNA into the large ribosomal subunit, where it forms part of the central protuberance. This is Large ribosomal subunit protein uL18 from Chromobacterium violaceum (strain ATCC 12472 / DSM 30191 / JCM 1249 / CCUG 213 / NBRC 12614 / NCIMB 9131 / NCTC 9757 / MK).